The sequence spans 367 residues: Transcription factor aptf-2 (367 aa).

The disordered stretch occupies residues 29–49 (VPATKETGPSSSAECSTQPAV). The span at 36–47 (GPSSSAECSTQP) shows a compositional bias: polar residues. The segment at 220 to 354 (AKQKAFPNKV…GVASELRRLT (135 aa)) is H-S-H (helix-span-helix), dimerization.

Belongs to the AP-2 family. In terms of assembly, binds DNA as a dimer.

The protein resides in the nucleus. It localises to the cytoplasm. In terms of biological role, sequence-specific DNA-binding protein that interacts with enhancer elements to regulate transcription of selected genes. Required for neuroblast and epidermal morphogenesis, perhaps acting in cooperation with transcription factor aptf-4. The chain is Transcription factor aptf-2 from Caenorhabditis elegans.